Reading from the N-terminus, the 152-residue chain is MAKRVQVVLNEDIKSLGNDGDLVEVAPGFARNFLLPNKKALPVTPTVLKQVEHRRAKQAEKEAAKKQEAIDFQTALTTIGRFTVKKQVGEDGVLFGTVTNGDVAEVVKEATKKDIDRRDISVPEIHGVGKYKVQIKLHNEVNAEINLEVTSY.

It belongs to the bacterial ribosomal protein bL9 family.

In terms of biological role, binds to the 23S rRNA. The polypeptide is Large ribosomal subunit protein bL9 (Prochlorococcus marinus (strain NATL1A)).